Here is a 749-residue protein sequence, read N- to C-terminus: Disintegrin and metalloproteinase domain-containing protein 10 (749 aa).

Positions 1–18 are cleaved as a signal peptide; that stretch reads MVLPTVLILLLSWAAGLG. A propeptide spanning residues 19–214 is cleaved from the precursor; sequence GQYGNPLNKY…MGPELLRKKR (196 aa). The Cysteine switch motif lies at 171-178; the sequence is GGCADHSV. Cys-173 contacts Zn(2+). Over 215–673 the chain is Extracellular; the sequence is TTLAERNTCQ…SPQLYENIAE (459 aa). One can recognise a Peptidase M12B domain in the interval 221–457; the sequence is NTCQLYIQTD…KRNNCFVESG (237 aa). Disulfide bonds link Cys-223-Cys-314, Cys-345-Cys-452, Cys-400-Cys-436, Cys-461-Cys-496, Cys-472-Cys-485, Cys-474-Cys-480, Cys-484-Cys-516, Cys-504-Cys-512, Cys-511-Cys-537, Cys-525-Cys-544, Cys-531-Cys-563, Cys-556-Cys-568, Cys-573-Cys-599, Cys-581-Cys-608, Cys-583-Cys-598, Cys-595-Cys-640, and Cys-633-Cys-646. N-linked (GlcNAc...) asparagine glycans are attached at residues Asn-268 and Asn-279. His-384 contacts Zn(2+). The active site involves Glu-385. Zn(2+) contacts are provided by His-388 and His-394. N-linked (GlcNAc...) asparagine glycosylation is present at Asn-440. Residues 458–552 enclose the Disintegrin domain; sequence QPICGNGMVE…LCPASDPKPN (95 aa). N-linked (GlcNAc...) asparagine glycosylation is present at Asn-552. The helical transmembrane segment at 674–697 threads the bilayer; it reads WIVAHWWAVLLMGIALIMLMAGFI. Residues 698-749 lie on the Cytoplasmic side of the membrane; sequence KICSVHTPSSNPKLPPPKPLPGTLKRRRPPQPIQQPPRQRPRESYQMGHMRR. A disordered region spans residues 705–749; sequence PSSNPKLPPPKPLPGTLKRRRPPQPIQQPPRQRPRESYQMGHMRR. The SH3-binding motif lies at 709 to 716; that stretch reads PKLPPPKP. Thr-720 carries the phosphothreonine modification. The short motif at 723-729 is the SH3-binding element; that stretch reads RRRPPQP. The interval 735–749 is interaction with AP2A1, AP2A2 and AP2M1; the sequence is RQRPRESYQMGHMRR.

Forms a ternary EFNA5-EPHA3-ADAM10 complex mediating EFNA5 extracellular domain shedding by ADAM10 which regulates the EFNA5-EPHA3 complex internalization and function, the cleavage occurs in trans, with ADAM10 and its substrate being on the membranes of opposing cells. Interacts with the clathrin adapter AP2 complex subunits AP2A1, AP2A2, AP2B1, and AP2M1; this interaction facilitates ADAM10 endocytosis from the plasma membrane during long-term potentiation in hippocampal neurons. Forms a ternary complex composed of ADAM10, EPHA4 and CADH1; within the complex, ADAM10 cleaves CADH1 which disrupts adherens junctions. Interacts with EPHA2. Interacts with NGF in a divalent cation-dependent manner. Interacts with TSPAN14; the interaction promotes ADAM10 maturation and cell surface expression. Interacts with TSPAN5, TSPAN10, TSPAN14, TSPAN15, TSPAN17 and TSPAN33; these interactions regulate ADAM10 substrate specificity, endocytosis and turnover. Interacts (via extracellular domain) with TSPAN33 (via extracellular domain) and (via cytoplasmic domain) with AFDN; interaction with TSPAN33 allows the docking of ADAM10 to zonula adherens through a PDZ11-dependent interaction between TSPAN33 and PLEKHA7 while interaction with AFDN locks ADAM10 at zonula adherens. Interacts with DLG1; this interaction recruits ADAM10 to the cell membrane during long-term depression in hippocampal neurons. Interacts (via extracellular domain) with BACE1 (via extracellular domain). Interacts with FAM171A1. Zn(2+) serves as cofactor. The precursor is cleaved by furin and PCSK7. Expressed in brain, kidney, lung, spleen, ovary and testis.

It localises to the cell membrane. Its subcellular location is the golgi apparatus membrane. The protein resides in the cytoplasmic vesicle. It is found in the clathrin-coated vesicle. The protein localises to the cell projection. It localises to the axon. Its subcellular location is the dendrite. The protein resides in the cell junction. It is found in the adherens junction. The protein localises to the cytoplasm. The catalysed reaction is Endopeptidase of broad specificity.. Its activity is regulated as follows. Catalytically inactive when the propeptide is intact and associated with the mature enzyme. The disintegrin and cysteine-rich regions modulate access of substrates to exerts an inhibitory effect on the cleavage of ADAM10 substrates. Functionally, transmembrane metalloprotease which mediates the ectodomain shedding of a myriad of transmembrane proteins, including adhesion proteins, growth factor precursors and cytokines being essential for development and tissue homeostasis. Associates with six members of the tetraspanin superfamily TspanC8 which regulate its exit from the endoplasmic reticulum and its substrate selectivity. Cleaves the membrane-bound precursor of TNF-alpha at '76-Ala-|-Val-77' to its mature soluble form. Responsible for the proteolytical release of soluble JAM3 from endothelial cells surface. Responsible for the proteolytic release of several other cell-surface proteins, including heparin-binding epidermal growth-like factor, ephrin-A2, CD44, CDH2 and for constitutive and regulated alpha-secretase cleavage of amyloid precursor protein (APP). Contributes to the normal cleavage of the cellular prion protein. Involved in the cleavage of the adhesion molecule L1 at the cell surface and in released membrane vesicles, suggesting a vesicle-based protease activity. Also controls the proteolytic processing of Notch and mediates lateral inhibition during neurogenesis. Required for the development of type 1 transitional B cells into marginal zone B cells, probably by cleaving Notch. Responsible for the FasL ectodomain shedding and for the generation of the remnant ADAM10-processed FasL (FasL APL) transmembrane form. Also cleaves the ectodomain of the integral membrane proteins CORIN and ITM2B. Mediates the proteolytic cleavage of LAG3, leading to release the secreted form of LAG3. Mediates the proteolytic cleavage of IL6R and IL11RA, leading to the release of secreted forms of IL6R and IL11RA. Enhances the cleavage of CHL1 by BACE1. Cleaves NRCAM. Cleaves TREM2, resulting in shedding of the TREM2 ectodomain. Involved in the development and maturation of glomerular and coronary vasculature. During development of the cochlear organ of Corti, promotes pillar cell separation by forming a ternary complex with CADH1 and EPHA4 and cleaving CADH1 at adherens junctions. May regulate the EFNA5-EPHA3 signaling. Regulates leukocyte transmigration as a sheddase for the adherens junction protein VE-cadherin/CDH5 in endothelial cells. The sequence is that of Disintegrin and metalloproteinase domain-containing protein 10 (Adam10) from Rattus norvegicus (Rat).